The primary structure comprises 97 residues: MIELREKNGSAVFVVKAQPRSSKSRVCGLYNGGLKVNLKAAPVDDAANRECCELFSKLFRIPPSRVHILSGQSSRTKTVMVEGISSKAAALVLEPFG.

The protein belongs to the UPF0235 family.

This Pelodictyon phaeoclathratiforme (strain DSM 5477 / BU-1) protein is UPF0235 protein Ppha_2415.